The chain runs to 742 residues: Serine/threonine-protein kinase SKY1 (742 aa).

The tract at residues 13-146 (KSAHLADTST…KDYRPGGYHP (134 aa)) is disordered. Over residues 19 to 35 (DTSTDASISCEEATSSQ) the composition is skewed to polar residues. The span at 56–73 (TKSKLSLALQTSKSSSSA) shows a compositional bias: low complexity. A compositionally biased stretch (basic and acidic residues) spans 81–101 (TSSKTEDFSTKSIKKKPDSGV). The span at 106-127 (SIQSDSGPQSDSDLDSDSSISS) shows a compositional bias: low complexity. The span at 128-140 (CDERNEESLKDYR) shows a compositional bias: basic and acidic residues. The Protein kinase domain maps to 158-706 (YILVRKLGWG…AGGLVNHPWL (549 aa)). ATP-binding positions include 164–172 (LGWGHFSTV) and K187. D294 functions as the Proton acceptor in the catalytic mechanism. Phosphothreonine occurs at positions 383 and 386. A phosphoserine mark is found at S388, S393, S410, S427, S432, S445, S449, and S453. Residues 459–491 (INEDSNDNNNNDNSKNKNNNNNNSNNNNNEDIM) are disordered. Residues 465 to 489 (DNNNNDNSKNKNNNNNNSNNNNNED) are compositionally biased toward low complexity.

It belongs to the protein kinase superfamily. Ser/Thr protein kinase family.

The catalysed reaction is L-seryl-[protein] + ATP = O-phospho-L-seryl-[protein] + ADP + H(+). It carries out the reaction L-threonyl-[protein] + ATP = O-phospho-L-threonyl-[protein] + ADP + H(+). In terms of biological role, constitutively active kinase, specifically and sequentially phosphorylates serine/arginine (SR)-type shuttling mRNA binding proteins in their RS dipeptide repeats. The polypeptide is Serine/threonine-protein kinase SKY1 (SKY1) (Saccharomyces cerevisiae (strain ATCC 204508 / S288c) (Baker's yeast)).